A 629-amino-acid polypeptide reads, in one-letter code: tRNA uridine 5-carboxymethylaminomethyl modification enzyme MnmG (629 aa).

Residues 13-18 (GGGHAG), V125, and S180 each bind FAD. NAD(+) is bound at residue 273–287 (GPRYCPSIEDKVMRF). Q370 is a binding site for FAD.

This sequence belongs to the MnmG family. In terms of assembly, homodimer. Heterotetramer of two MnmE and two MnmG subunits. Requires FAD as cofactor.

It localises to the cytoplasm. Its function is as follows. NAD-binding protein involved in the addition of a carboxymethylaminomethyl (cmnm) group at the wobble position (U34) of certain tRNAs, forming tRNA-cmnm(5)s(2)U34. The protein is tRNA uridine 5-carboxymethylaminomethyl modification enzyme MnmG of Sodalis glossinidius (strain morsitans).